A 218-amino-acid polypeptide reads, in one-letter code: Hypoxanthine-guanine phosphoribosyltransferase (218 aa).

Ala2 bears the N-acetylalanine mark. Lys69 provides a ligand contact to GMP. The residue at position 103 (Lys103) is an N6-acetyllysine. Residue Lys115 forms a Glycyl lysine isopeptide (Lys-Gly) (interchain with G-Cter in SUMO1); alternate linkage. Residue Lys115 forms a Glycyl lysine isopeptide (Lys-Gly) (interchain with G-Cter in SUMO2); alternate linkage. GMP-binding positions include 134–142, Lys166, 186–188, and Asp194; these read EDIIDTGKT and KFV. The active-site Proton acceptor is the Asp138. Thr142 is modified (phosphothreonine). Asp194 contributes to the Mg(2+) binding site.

This sequence belongs to the purine/pyrimidine phosphoribosyltransferase family. As to quaternary structure, homotetramer. Requires Mg(2+) as cofactor.

The protein localises to the cytoplasm. The enzyme catalyses IMP + diphosphate = hypoxanthine + 5-phospho-alpha-D-ribose 1-diphosphate. It carries out the reaction GMP + diphosphate = guanine + 5-phospho-alpha-D-ribose 1-diphosphate. Its pathway is purine metabolism; IMP biosynthesis via salvage pathway; IMP from hypoxanthine: step 1/1. Functionally, converts guanine to guanosine monophosphate, and hypoxanthine to inosine monophosphate. Transfers the 5-phosphoribosyl group from 5-phosphoribosylpyrophosphate onto the purine. Plays a central role in the generation of purine nucleotides through the purine salvage pathway. This is Hypoxanthine-guanine phosphoribosyltransferase (HPRT1) from Pan troglodytes (Chimpanzee).